The primary structure comprises 199 residues: Adenylyl-sulfate kinase (199 aa).

34-41 contacts ATP; that stretch reads GLSGSGKS. Residue Ser108 is the Phosphoserine intermediate of the active site.

The protein belongs to the APS kinase family.

It catalyses the reaction adenosine 5'-phosphosulfate + ATP = 3'-phosphoadenylyl sulfate + ADP + H(+). Its pathway is sulfur metabolism; hydrogen sulfide biosynthesis; sulfite from sulfate: step 2/3. Functionally, catalyzes the synthesis of activated sulfate. In Oceanobacillus iheyensis (strain DSM 14371 / CIP 107618 / JCM 11309 / KCTC 3954 / HTE831), this protein is Adenylyl-sulfate kinase.